We begin with the raw amino-acid sequence, 128 residues long: Keratin-associated protein 21-1 (128 aa).

The 51 X 2 AA repeats of G-[YCGS] stretch occupies residues 11–117 (GGCGYGSRYG…RYGCGYGSGC (107 aa)).

Belongs to the KRTAP type 21 family. As to quaternary structure, interacts with hair keratins. In terms of tissue distribution, strong expression in narrowly defined pattern restricted to the lower and middle cortical regions of the hair shaft in both developing and cycling hair. During hair follicle regression (catagen), expression levels decrease until expression is no longer detectable in follicles at resting stage (telogen).

In terms of biological role, in the hair cortex, hair keratin intermediate filaments are embedded in an interfilamentous matrix, consisting of hair keratin-associated proteins (KRTAP), which are essential for the formation of a rigid and resistant hair shaft through their extensive disulfide bond cross-linking with abundant cysteine residues of hair keratins. The matrix proteins include the high-sulfur and high-glycine-tyrosine keratins. This chain is Keratin-associated protein 21-1 (Krtap21-1), found in Mus musculus (Mouse).